The chain runs to 1844 residues: MAFQLALDALAPTTHRDPSLHPILESTVDSIRSSIQTYPWSIPKELLPLLNSYGIPTSGLGTSHHPHAAHKTIETFLLCTHWSFQATTPSSVMFMKPSKFNKLAQVNSNFRELKNYRLHPNDSTRYPFTSPDLPVFPTIFMHDALMYYHPSQIMDLFLRKPNLERLYASLVVPPEAHLSDQSFYPKLYTYTTTRHTLHYVPEGHEAGSYNQPSDAHSWLRINSIRLGNHHLSVTILESWGPVHSLLIQRGTPPPDPSLQAPPTLMTSDLFRSYQEPRLDVVSFRIPDAIELPQATFLQQPLRDRLVPRAVYNALFTYTRAVRTLRTSDPAAFVRMHSSKPDHDWVTSNAWDNLQTFALLNVPLRPNVVYHVLQSPIASLSLYLRQHWRRLTATAVPILSFLTLLQRFLPLPIPLAEVKSITAFRRELYRKKEPHHPLDVFHLQHRVRNYHSAISAVRPASPPHQKLPHALQKAALLLLRPISPLLTATPFFRSEQKSMLPNAELSWTLKRFALPWQASLVLLALSESSILLHKLFSPPTLQAQHDTYHRHLHPGSYSLQWERTPLSIPRTTAFLPFTPTTSTAPPDRSEASLPPAFASTFVPRPPPAASSPGAQPPTTTAAPPTPIEPTQRTHQNSDLALESSTSTEPPPPPIRSPDMTPSAPVLFPEINSPRRFPPQLPATPDLEPAHTPPPLSIPHQDPTDSADPLMGSHLLHHSLPAPPTHPLPSSQLLPAPLTNDPTAIGPVLPFEELHPRRYPENTATFLTRLRSLPSNHLPQPTLNCLLSAVSDQTKVSEEHLWESLQTILPDSQLSNEETNTLGLSTEHLTALAHLYNFQATVYSDRGPILFGPSDTIKRIDITHTTGPPSHFSPGKRLLGSQPSAKGHPSDPLIRAMKSFKVSGNYLPFSEAHNHPTSISHAKNLISNMKNGFDGVLSLLDVSTGQRTGPTPKERIIQIDHYLDTNPGKTTPVVHFAGFAGCGKTYPIQQLLKTKLFKDFRVSCPTTELRTEWKTAMELHGSQSWRFNTWESSILKSSRILVIDEIYKMPRGYLDLSILADPALELVIILGDPLQGEYHSQSKDSSNHRLPSETLRLLPYIDMYCWWSYRIPQCIARLFQIHSFNAWQGVIGSVSTPHDQSPVLTNSHASSLTFNSLGYRSCTISSSQGLTFCDPAIIVLDNYTKWLSSANGLVALTRSRSGVQFMGPSSYVGGTNGSSAMFSDAFNNSLIIMDRYFPSLFPQLKLITSPLTTRGPKLNGATPSASPTHRSPNFHLPPHIPLSYDRDFVTVNPTLPDQGPETRLDTHFLPPSRLPLHFDLPPAITPPPVSTSVDPPQAKASPVYPGEFFDSLAAFFLPAHDPSTREILHKDQSSNQFPWFDRPFSLSCQPSSLISAKHAPNHDPTLLPASINKRLRFRPSDSPHQITADDVVLGLQLFHSLCRAYSRQPNSTVPFNPELFAECISLNEYAQLSSKTQSTIVANASRSDPDWRHTTVKIFAKAQHKVNDGSIFGSWKACQTLALMHDYVILVLGPVKKYQRIFDNADRPPNIYSHCGKTPNQLRDWCQEHLTHSTPKIANDYTAFDQSQHGESVVLEALKMKRLNIPSHLIQLHVHLKTNVSTQFGPLTCMRLTGEPGTYDDNTDYNLAVIYSQYDVGSCPIMVSGDDSLIDHPLPTRHDWPSVLKRLHLRFKLELTSHPLFCGYYVGPAGCIRNPLALFCKLMIAVDDDALDDRRLSYLTEFTTGHLLGESLWHLLPETHVQYQSACFDFFCRRCPRHEKMLLDDSTPALSLLERITSSPRWLTKNAMYLLPAKLRLAITSLSQTQSFPESIEVSHAESELLHYVQ.

The region spanning 58–219 (SGLGTSHHPH…NQPSDAHSWL (162 aa)) is the Alphavirus-like MT domain. The segment at 571–739 (TAFLPFTPTT…QLLPAPLTND (169 aa)) is disordered. 2 stretches are compositionally biased toward low complexity: residues 609 to 621 (SSPGAQPPTTTAA) and 726 to 736 (LPSSQLLPAPL). One can recognise an OTU domain in the interval 728–879 (SSQLLPAPLT…FSPGKRLLGS (152 aa)). The Peptidase C21 domain maps to 730–884 (QLLPAPLTND…RLLGSQPSAK (155 aa)). Cys-783 serves as the catalytic For protease activity. The segment at 859–887 (DITHTTGPPSHFSPGKRLLGSQPSAKGHP) is disordered. The GPP flap motif lies at 865-867 (GPP). His-869 functions as the For protease activity in the catalytic mechanism. The region spanning 946-1103 (TGPTPKERII…RLLPYIDMYC (158 aa)) is the (+)RNA virus helicase ATP-binding domain. Residue 976–983 (GFAGCGKT) participates in ATP binding. Residues 1104–1236 (WWSYRIPQCI…SLIIMDRYFP (133 aa)) form the (+)RNA virus helicase C-terminal domain. The RdRp catalytic domain occupies 1572–1678 (TPKIANDYTA…DHPLPTRHDW (107 aa)).

The protein belongs to the Tymoviridae non-structural replication polyprotein family. Interacts with host ubiquitin. Post-translationally, specific enzymatic cleavages by the host yield mature proteins.

The protein localises to the host chloroplast envelope. The catalysed reaction is Thiol-dependent hydrolysis of ester, thioester, amide, peptide and isopeptide bonds formed by the C-terminal Gly of ubiquitin (a 76-residue protein attached to proteins as an intracellular targeting signal).. It carries out the reaction RNA(n) + a ribonucleoside 5'-triphosphate = RNA(n+1) + diphosphate. Acts as a cysteine protease, methyltransferase and deubiquitinase. The cysteine protease activity cleaves the polyprotein giving rise to mature proteins. The protease has the ability to process substrates in trans. The methyltransferase domain is probably involved in viral RNA capping. The deubiquitylating activity counteracts the degradation of the viral polymerase mediated by the host ubiquitin-proteasome system. The polymerase is thus stabilized and infectivity is increased. Favors K63 poly-Ub linkage. Its function is as follows. RNA-directed RNA polymerase is responsible for the replication and transcription of the genome. This chain is Non-structural replication polyprotein, found in Turnip yellow mosaic virus.